We begin with the raw amino-acid sequence, 542 residues long: CTP synthase (542 aa).

The interval 1-265 (MTAFIFITGG…GRMLTELLKV (265 aa)) is amidoligase domain. CTP is bound at residue S13. S13 is a binding site for UTP. 14 to 19 (SVGKGI) contacts ATP. Y54 lines the L-glutamine pocket. Residue D71 participates in ATP binding. 2 residues coordinate Mg(2+): D71 and E140. CTP contacts are provided by residues 147–149 (DYE), 186–191 (KTKPLQ), and K222. Residues 186 to 191 (KTKPLQ) and K222 each bind UTP. One can recognise a Glutamine amidotransferase type-1 domain in the interval 297–532 (YVKLRDAYIS…LKAALARKMG (236 aa)). G352 provides a ligand contact to L-glutamine. C379 functions as the Nucleophile; for glutamine hydrolysis in the catalytic mechanism. Residues 380–383 (YGMQ), E403, and R460 contribute to the L-glutamine site. Residues H505 and E507 contribute to the active site.

Belongs to the CTP synthase family. Homotetramer.

It catalyses the reaction UTP + L-glutamine + ATP + H2O = CTP + L-glutamate + ADP + phosphate + 2 H(+). The enzyme catalyses L-glutamine + H2O = L-glutamate + NH4(+). The catalysed reaction is UTP + NH4(+) + ATP = CTP + ADP + phosphate + 2 H(+). It functions in the pathway pyrimidine metabolism; CTP biosynthesis via de novo pathway; CTP from UDP: step 2/2. Allosterically activated by GTP, when glutamine is the substrate; GTP has no effect on the reaction when ammonia is the substrate. The allosteric effector GTP functions by stabilizing the protein conformation that binds the tetrahedral intermediate(s) formed during glutamine hydrolysis. Inhibited by the product CTP, via allosteric rather than competitive inhibition. Its function is as follows. Catalyzes the ATP-dependent amination of UTP to CTP with either L-glutamine or ammonia as the source of nitrogen. Regulates intracellular CTP levels through interactions with the four ribonucleotide triphosphates. The protein is CTP synthase of Caldivirga maquilingensis (strain ATCC 700844 / DSM 13496 / JCM 10307 / IC-167).